The chain runs to 98 residues: Transcription elongation factor A protein-like 7 (98 aa).

Residues 1 to 22 are compositionally biased toward basic and acidic residues; the sequence is MQKSCNEKEGKPKGSEAKREDE. A disordered region spans residues 1 to 33; it reads MQKSCNEKEGKPKGSEAKREDEQPCGALEGQRL. The stretch at 59-89 forms a coiled coil; that stretch reads GEEMTGEEEEMERCLEEIRSLRKKFRALHSN.

The protein belongs to the TFS-II family. TFA subfamily.

The protein resides in the nucleus. Plays a role in the negative regulation of NF-kappa-B signaling at the basal level by modulating transcriptional activity of NF-kappa-B on its target gene promoters. Associates with cyclin D1 promoter containing Myc E-box sequence and transcriptionally represses cyclin D1 expression. Regulates telomerase reverse transcriptase expression and telomerase activity in both ALT (alternative lengthening of telomeres)and telomerase-positive cell lines. The polypeptide is Transcription elongation factor A protein-like 7 (Tceal7) (Mus musculus (Mouse)).